The chain runs to 252 residues: Probable transcriptional regulatory protein Caur_1043 (252 aa).

Residues 1 to 14 are compositionally biased toward basic residues; that stretch reads MSGHSKWHTIRRTK. The segment at 1–22 is disordered; the sequence is MSGHSKWHTIRRTKGVNDQRRG.

This sequence belongs to the TACO1 family.

It is found in the cytoplasm. This Chloroflexus aurantiacus (strain ATCC 29366 / DSM 635 / J-10-fl) protein is Probable transcriptional regulatory protein Caur_1043.